A 110-amino-acid polypeptide reads, in one-letter code: METIAKHCHARSSAQKVRLVADLIRGKKVSQALEVLTYTNKKAAGLVKKVLESAIANAEHNDGADIDDLKVAKIFVDEGPSMKRIMPRAKGRADRILKRTSHITVVVSDR.

It belongs to the universal ribosomal protein uL22 family. As to quaternary structure, part of the 50S ribosomal subunit.

This protein binds specifically to 23S rRNA; its binding is stimulated by other ribosomal proteins, e.g. L4, L17, and L20. It is important during the early stages of 50S assembly. It makes multiple contacts with different domains of the 23S rRNA in the assembled 50S subunit and ribosome. In terms of biological role, the globular domain of the protein is located near the polypeptide exit tunnel on the outside of the subunit, while an extended beta-hairpin is found that lines the wall of the exit tunnel in the center of the 70S ribosome. This chain is Large ribosomal subunit protein uL22, found in Pectobacterium atrosepticum (strain SCRI 1043 / ATCC BAA-672) (Erwinia carotovora subsp. atroseptica).